Reading from the N-terminus, the 658-residue chain is Glycogen debranching enzyme (658 aa).

Asp336 functions as the Nucleophile in the catalytic mechanism. Glu371 (proton donor) is an active-site residue. Residues 460–484 (ANGEENRDGSNNNHSNNHGKEGLGG) are disordered.

Belongs to the glycosyl hydrolase 13 family.

The catalysed reaction is Hydrolysis of (1-&gt;6)-alpha-D-glucosidic linkages to branches with degrees of polymerization of three or four glucose residues in limit dextrin.. It functions in the pathway glycan degradation; glycogen degradation. Functionally, removes maltotriose and maltotetraose chains that are attached by 1,6-alpha-linkage to the limit dextrin main chain, generating a debranched limit dextrin. The polypeptide is Glycogen debranching enzyme (Escherichia fergusonii (strain ATCC 35469 / DSM 13698 / CCUG 18766 / IAM 14443 / JCM 21226 / LMG 7866 / NBRC 102419 / NCTC 12128 / CDC 0568-73)).